A 347-amino-acid chain; its full sequence is N-acetyl-gamma-glutamyl-phosphate reductase (347 aa).

Residue Cys152 is part of the active site.

This sequence belongs to the NAGSA dehydrogenase family. Type 1 subfamily.

The protein resides in the cytoplasm. The enzyme catalyses N-acetyl-L-glutamate 5-semialdehyde + phosphate + NADP(+) = N-acetyl-L-glutamyl 5-phosphate + NADPH + H(+). It functions in the pathway amino-acid biosynthesis; L-arginine biosynthesis; N(2)-acetyl-L-ornithine from L-glutamate: step 3/4. Functionally, catalyzes the NADPH-dependent reduction of N-acetyl-5-glutamyl phosphate to yield N-acetyl-L-glutamate 5-semialdehyde. The chain is N-acetyl-gamma-glutamyl-phosphate reductase from Neisseria meningitidis serogroup C / serotype 2a (strain ATCC 700532 / DSM 15464 / FAM18).